The primary structure comprises 118 residues: Large ribosomal subunit protein bL17 (118 aa).

This sequence belongs to the bacterial ribosomal protein bL17 family. Part of the 50S ribosomal subunit. Contacts protein L32.

The polypeptide is Large ribosomal subunit protein bL17 (Phytoplasma mali (strain AT)).